A 138-amino-acid chain; its full sequence is Ribulose bisphosphate carboxylase small subunit (138 aa).

The protein belongs to the RuBisCO small chain family. Heterohexadecamer of 8 large and 8 small subunits.

It localises to the plastid. The protein localises to the chloroplast. Its function is as follows. RuBisCO catalyzes two reactions: the carboxylation of D-ribulose 1,5-bisphosphate, the primary event in carbon dioxide fixation, as well as the oxidative fragmentation of the pentose substrate in the photorespiration process. Both reactions occur simultaneously and in competition at the same active site. Although the small subunit is not catalytic it is essential for maximal activity. This is Ribulose bisphosphate carboxylase small subunit from Pyropia dentata (Red alga).